The primary structure comprises 249 residues: Triosephosphate isomerase (249 aa).

12–14 (NWK) is a substrate binding site. The active-site Electrophile is H96. E166 acts as the Proton acceptor in catalysis. Residues G172, S211, and 232 to 233 (GG) contribute to the substrate site.

The protein belongs to the triosephosphate isomerase family. As to quaternary structure, homodimer.

The protein localises to the cytoplasm. It catalyses the reaction D-glyceraldehyde 3-phosphate = dihydroxyacetone phosphate. It functions in the pathway carbohydrate biosynthesis; gluconeogenesis. The protein operates within carbohydrate degradation; glycolysis; D-glyceraldehyde 3-phosphate from glycerone phosphate: step 1/1. In terms of biological role, involved in the gluconeogenesis. Catalyzes stereospecifically the conversion of dihydroxyacetone phosphate (DHAP) to D-glyceraldehyde-3-phosphate (G3P). This Xanthobacter flavus protein is Triosephosphate isomerase.